The following is a 252-amino-acid chain: Ribosome assembly factor mrt4 (252 aa).

This sequence belongs to the universal ribosomal protein uL10 family. Associates with the pre-60S ribosomal particle.

It is found in the nucleus. Its subcellular location is the nucleolus. The protein resides in the cytoplasm. Its function is as follows. Component of the ribosome assembly machinery. Nuclear paralog of the ribosomal protein P0, it binds pre-60S subunits at an early stage of assembly in the nucleolus, and is replaced by P0 in cytoplasmic pre-60S subunits and mature 80S ribosomes. This is Ribosome assembly factor mrt4 from Neurospora crassa (strain ATCC 24698 / 74-OR23-1A / CBS 708.71 / DSM 1257 / FGSC 987).